We begin with the raw amino-acid sequence, 203 residues long: MSRYRGPKLKISRRLGTLPGLTTKKSNKLNRPGKDGNTDIGKKLTEYGVRLEEKQKLKFNYGLTEKQLFRYVKEARRRQGVTGLILLQLLEMRLDTLCFTLGFAKSLAQARQLVNHGHITINKKVVSIPSFQCRLNDIISIKEKSSSKTLVETNIKNNQVREIPTHLRFDTVKLEAIVLDYCDRNDVSLQLDELLVIEHYSRR.

The interval 17–39 (TLPGLTTKKSNKLNRPGKDGNTD) is disordered. One can recognise an S4 RNA-binding domain in the interval 92–164 (MRLDTLCFTL…IKNNQVREIP (73 aa)).

Belongs to the universal ribosomal protein uS4 family. As to quaternary structure, part of the 30S ribosomal subunit. Contacts protein S5. The interaction surface between S4 and S5 is involved in control of translational fidelity.

Its subcellular location is the plastid. The protein localises to the chloroplast. Functionally, one of the primary rRNA binding proteins, it binds directly to 16S rRNA where it nucleates assembly of the body of the 30S subunit. Its function is as follows. With S5 and S12 plays an important role in translational accuracy. This is Small ribosomal subunit protein uS4c (rps4) from Phaeodactylum tricornutum (strain CCAP 1055/1).